A 246-amino-acid polypeptide reads, in one-letter code: Ribonuclease 3 (246 aa).

Residues 16–146 (ATELEAGIGY…LLAAVYLDGG (131 aa)) form the RNase III domain. Glu-59 contributes to the Mg(2+) binding site. The active site involves Asp-63. Positions 132 and 135 each coordinate Mg(2+). The active site involves Glu-135. The region spanning 173-242 (DFKTEFQEMV…ARQVLARFAA (70 aa)) is the DRBM domain.

This sequence belongs to the ribonuclease III family. In terms of assembly, homodimer. It depends on Mg(2+) as a cofactor.

The protein resides in the cytoplasm. The catalysed reaction is Endonucleolytic cleavage to 5'-phosphomonoester.. Digests double-stranded RNA. Involved in the processing of primary rRNA transcript to yield the immediate precursors to the large and small rRNAs (23S and 16S). Processes some mRNAs, and tRNAs when they are encoded in the rRNA operon. Processes pre-crRNA and tracrRNA of type II CRISPR loci if present in the organism. This is Ribonuclease 3 from Geobacter metallireducens (strain ATCC 53774 / DSM 7210 / GS-15).